The chain runs to 144 residues: Large ribosomal subunit protein uL16 (144 aa).

This sequence belongs to the universal ribosomal protein uL16 family. Part of the 50S ribosomal subunit.

Its function is as follows. Binds 23S rRNA and is also seen to make contacts with the A and possibly P site tRNAs. The protein is Large ribosomal subunit protein uL16 of Novosphingobium aromaticivorans (strain ATCC 700278 / DSM 12444 / CCUG 56034 / CIP 105152 / NBRC 16084 / F199).